The primary structure comprises 216 residues: N-(5'-phosphoribosyl)anthranilate isomerase (216 aa).

Belongs to the TrpF family.

The catalysed reaction is N-(5-phospho-beta-D-ribosyl)anthranilate = 1-(2-carboxyphenylamino)-1-deoxy-D-ribulose 5-phosphate. It participates in amino-acid biosynthesis; L-tryptophan biosynthesis; L-tryptophan from chorismate: step 3/5. The polypeptide is N-(5'-phosphoribosyl)anthranilate isomerase (Methanopyrus kandleri (strain AV19 / DSM 6324 / JCM 9639 / NBRC 100938)).